The chain runs to 127 residues: Protein FAM229A (127 aa).

The disordered stretch occupies residues 1–96 (MLPSSTPGPG…ATEHNPVRPL (96 aa)). Positions 24–39 (RSPAARAPAAASSLGP) are enriched in low complexity.

It belongs to the FAM229 family.

The chain is Protein FAM229A (FAM229A) from Homo sapiens (Human).